Consider the following 448-residue polypeptide: Ribosomal protein uS12 methylthiotransferase RimO (448 aa).

In terms of domain architecture, MTTase N-terminal spans 10–120 (PNIGFVSLGC…VMEHVHKYVP (111 aa)). [4Fe-4S] cluster is bound by residues Cys-19, Cys-55, Cys-84, Cys-152, Cys-156, and Cys-159. In terms of domain architecture, Radical SAM core spans 138-379 (LTPKHYAYLK…MELQQQISAQ (242 aa)). Positions 382–448 (QQKIGKTLPV…ADEYDLWGTC (67 aa)) constitute a TRAM domain.

This sequence belongs to the methylthiotransferase family. RimO subfamily. It depends on [4Fe-4S] cluster as a cofactor.

The protein resides in the cytoplasm. It catalyses the reaction L-aspartate(89)-[ribosomal protein uS12]-hydrogen + (sulfur carrier)-SH + AH2 + 2 S-adenosyl-L-methionine = 3-methylsulfanyl-L-aspartate(89)-[ribosomal protein uS12]-hydrogen + (sulfur carrier)-H + 5'-deoxyadenosine + L-methionine + A + S-adenosyl-L-homocysteine + 2 H(+). Its function is as follows. Catalyzes the methylthiolation of an aspartic acid residue of ribosomal protein uS12. This Mannheimia succiniciproducens (strain KCTC 0769BP / MBEL55E) protein is Ribosomal protein uS12 methylthiotransferase RimO.